We begin with the raw amino-acid sequence, 25 residues long: Cysteine protease inhibitor 2 (25 aa).

This sequence belongs to the protease inhibitor I3 (leguminous Kunitz-type inhibitor) family. Cortex of tuber.

Functionally, inhibitor of subtilisin. Inhibits moderately trypsin and chymotrypsin (serine proteases). May protect the plant by inhibiting proteases of invading organisms. The chain is Cysteine protease inhibitor 2 from Solanum tuberosum (Potato).